Here is a 556-residue protein sequence, read N- to C-terminus: (-)-alpha-pinene synthase (556 aa).

The Mg(2+) site is built by Asp-309, Asp-313, Asp-453, and Glu-461. A DDXXD motif motif is present at residues 309-313; the sequence is DDMYD.

This sequence belongs to the terpene synthase family. Tpsa subfamily. It depends on Mg(2+) as a cofactor. Mn(2+) serves as cofactor. Expressed in ripe fruits and roots. Not detected in vegetative tissues.

The protein localises to the cytoplasm. It localises to the cytosol. It catalyses the reaction (2E)-geranyl diphosphate = (1S,5S)-alpha-pinene + diphosphate. It participates in secondary metabolite biosynthesis; terpenoid biosynthesis. Monoterpene synthase catalyzing the production of (-)-alpha-pinene, beta-phellandrene and beta-myrcene as the major products. Unable to use farnesyl diphosphate as substrate. Exclusively expressed in the fruit of wild strawberries. Not detected in cultivated varieties. This chain is (-)-alpha-pinene synthase, found in Fragaria vesca (Woodland strawberry).